The sequence spans 248 residues: Pyridoxine 5'-phosphate synthase (248 aa).

Asparagine 7 is a binding site for 3-amino-2-oxopropyl phosphate. 9-10 (DH) serves as a coordination point for 1-deoxy-D-xylulose 5-phosphate. Arginine 18 is a binding site for 3-amino-2-oxopropyl phosphate. Catalysis depends on histidine 52, which acts as the Proton acceptor. 1-deoxy-D-xylulose 5-phosphate is bound by residues arginine 54 and histidine 59. Glutamate 79 (proton acceptor) is an active-site residue. Threonine 109 contributes to the 1-deoxy-D-xylulose 5-phosphate binding site. Histidine 201 acts as the Proton donor in catalysis. 3-amino-2-oxopropyl phosphate-binding positions include glycine 202 and 223–224 (GH).

Belongs to the PNP synthase family. As to quaternary structure, homooctamer; tetramer of dimers.

The protein resides in the cytoplasm. It carries out the reaction 3-amino-2-oxopropyl phosphate + 1-deoxy-D-xylulose 5-phosphate = pyridoxine 5'-phosphate + phosphate + 2 H2O + H(+). It functions in the pathway cofactor biosynthesis; pyridoxine 5'-phosphate biosynthesis; pyridoxine 5'-phosphate from D-erythrose 4-phosphate: step 5/5. Its function is as follows. Catalyzes the complicated ring closure reaction between the two acyclic compounds 1-deoxy-D-xylulose-5-phosphate (DXP) and 3-amino-2-oxopropyl phosphate (1-amino-acetone-3-phosphate or AAP) to form pyridoxine 5'-phosphate (PNP) and inorganic phosphate. The chain is Pyridoxine 5'-phosphate synthase from Opitutus terrae (strain DSM 11246 / JCM 15787 / PB90-1).